We begin with the raw amino-acid sequence, 1645 residues long: Outer membrane protein B (1645 aa).

A propeptide spanning residues 1329-1352 (GALRYLSNSETADVGGSETGAVSS) is cleaved from the precursor. Residues 1357–1645 (IDQVSYGVWA…QGTLKVRINF (289 aa)) enclose the Autotransporter domain.

Belongs to the rickettsiae OmpA/OmpB family.

Its subcellular location is the periplasm. It localises to the secreted. The protein localises to the cell surface. The protein resides in the cell outer membrane. In terms of biological role, the 120 kDa surface-exposed protein is a major structural protein which may play a role as a rickettsial virulence factor and/or immunogen during infection. Its function is as follows. The 32 kDa beta peptide may serve as a membrane anchor. This chain is Outer membrane protein B (ompB), found in Rickettsia typhi (strain ATCC VR-144 / Wilmington).